The sequence spans 273 residues: 4-hydroxy-tetrahydrodipicolinate reductase (273 aa).

NAD(+)-binding positions include 12–17 (GAGGRM) and glutamate 38. Residue arginine 39 coordinates NADP(+). NAD(+)-binding positions include 102-104 (GTT) and 126-129 (AANF). Residue histidine 159 is the Proton donor/acceptor of the active site. Residue histidine 160 coordinates (S)-2,3,4,5-tetrahydrodipicolinate. Lysine 163 serves as the catalytic Proton donor. 169-170 (GT) contacts (S)-2,3,4,5-tetrahydrodipicolinate.

This sequence belongs to the DapB family. In terms of assembly, homotetramer.

The protein localises to the cytoplasm. The enzyme catalyses (S)-2,3,4,5-tetrahydrodipicolinate + NAD(+) + H2O = (2S,4S)-4-hydroxy-2,3,4,5-tetrahydrodipicolinate + NADH + H(+). It carries out the reaction (S)-2,3,4,5-tetrahydrodipicolinate + NADP(+) + H2O = (2S,4S)-4-hydroxy-2,3,4,5-tetrahydrodipicolinate + NADPH + H(+). It participates in amino-acid biosynthesis; L-lysine biosynthesis via DAP pathway; (S)-tetrahydrodipicolinate from L-aspartate: step 4/4. Catalyzes the conversion of 4-hydroxy-tetrahydrodipicolinate (HTPA) to tetrahydrodipicolinate. This chain is 4-hydroxy-tetrahydrodipicolinate reductase, found in Escherichia coli O157:H7.